A 256-amino-acid chain; its full sequence is Reaction center protein M chain (256 aa).

3 helical membrane passes run 52-78 (PGVA…LASV), 110-139 (EGGW…ARAL), and 142-167 (GTHM…PLLL). The (7R,8Z)-bacteriochlorophyll b site is built by His181 and His201. A helical transmembrane segment spans residues 197 to 225 (YNPFHMLSIAFLYGSAVLFAMHGATILAV). 2 residues coordinate Fe cation: His218 and Glu233. Residue Trp251 coordinates a ubiquinone.

It belongs to the reaction center PufL/M/PsbA/D family. As to quaternary structure, reaction center is composed of four bacteriochlorophylls, two bacteriopheophytins, two ubiquinones, one iron, and two highly hydrophobic polypeptide chains (designated L and M).

The protein resides in the cellular chromatophore membrane. The reaction center is a membrane-bound complex that mediates the initial photochemical event in the electron transfer process of photosynthesis. The protein is Reaction center protein M chain (pufM) of Pararhodospirillum photometricum (Rhodospirillum photometricum).